A 69-amino-acid chain; its full sequence is Pancreatic secretory trypsin inhibitor (69 aa).

The Kazal-like domain occupies 8 to 65 (TGTEAACSNYDLKKGCAKIFDPVCGTDNILYSNECLLCFQNLQRKTNVRIKRRGTCQE). 3 disulfides stabilise this stretch: Cys14–Cys45, Cys23–Cys42, and Cys31–Cys63.

It localises to the secreted. In terms of biological role, this is a trypsin inhibitor, its physiological function is to prevent the trypsin-catalyzed premature activation of zymogens within the pancreas. This Struthio camelus (Common ostrich) protein is Pancreatic secretory trypsin inhibitor (SPINK1).